The chain runs to 147 residues: Ubiquitin-conjugating enzyme E2 2 (147 aa).

Residues 1–147 (MALKRIQKEL…AREWTQKYAM (147 aa)) enclose the UBC core domain. The active-site Glycyl thioester intermediate is the cysteine 85.

This sequence belongs to the ubiquitin-conjugating enzyme family. As to quaternary structure, interacts with the brc-1-brd-1 heterodimer following ionizing irradiation. As to expression, expressed in the nervous system.

The protein localises to the nucleus. It localises to the chromosome. The protein resides in the cytoplasm. The catalysed reaction is S-ubiquitinyl-[E1 ubiquitin-activating enzyme]-L-cysteine + [E2 ubiquitin-conjugating enzyme]-L-cysteine = [E1 ubiquitin-activating enzyme]-L-cysteine + S-ubiquitinyl-[E2 ubiquitin-conjugating enzyme]-L-cysteine.. The protein operates within protein modification; protein ubiquitination. Its function is as follows. Catalyzes the covalent attachment of ubiquitin to other proteins. Mediates the selective degradation of short-lived and abnormal proteins. Plays a role in the DNA damage response. In particular, in response to ionizing radiation, associates with the E3 ubiquitin-protein ligase brc-1-brd-1 heterodimer on chromatin to activate E3-ubiquitin ligase activity of the heterodimer, and thus its DNA damage repair mechanisms. Required, cell autonomously, for death of the linker cell, a male-specific cell which guides the elongation of the gonad; perhaps acting as part of the ubiquitin proteasome system (UPS) and modulated by heat shock transcription factor hsf-1. This is Ubiquitin-conjugating enzyme E2 2 from Caenorhabditis elegans.